The primary structure comprises 911 residues: Protein translocase subunit SecA (911 aa).

ATP contacts are provided by residues glutamine 87, 105-109, and aspartate 512; that span reads GEGKT. Positions 861–880 are disordered; the sequence is APGLGSEQLSEEGAEVAVAS. Zn(2+) is bound by residues cysteine 895, cysteine 897, cysteine 906, and histidine 907.

It belongs to the SecA family. Monomer and homodimer. Part of the essential Sec protein translocation apparatus which comprises SecA, SecYEG and auxiliary proteins SecDF-YajC and YidC. Zn(2+) serves as cofactor.

The protein resides in the cell inner membrane. The protein localises to the cytoplasm. The enzyme catalyses ATP + H2O + cellular proteinSide 1 = ADP + phosphate + cellular proteinSide 2.. Its function is as follows. Part of the Sec protein translocase complex. Interacts with the SecYEG preprotein conducting channel. Has a central role in coupling the hydrolysis of ATP to the transfer of proteins into and across the cell membrane, serving both as a receptor for the preprotein-SecB complex and as an ATP-driven molecular motor driving the stepwise translocation of polypeptide chains across the membrane. The polypeptide is Protein translocase subunit SecA (Pseudomonas putida (strain ATCC 47054 / DSM 6125 / CFBP 8728 / NCIMB 11950 / KT2440)).